The chain runs to 363 residues: Peptide chain release factor 2 (363 aa).

An N5-methylglutamine modification is found at glutamine 251.

It belongs to the prokaryotic/mitochondrial release factor family. Methylated by PrmC. Methylation increases the termination efficiency of RF2.

The protein localises to the cytoplasm. Its function is as follows. Peptide chain release factor 2 directs the termination of translation in response to the peptide chain termination codons UGA and UAA. The sequence is that of Peptide chain release factor 2 from Helicobacter pylori (strain P12).